The primary structure comprises 578 residues: Probable multidrug ABC transporter ATP-binding protein YbhF (578 aa).

2 ABC transporter domains span residues 6–237 (ITLN…LMTS) and 330–559 (IEAK…PDPT). Residues 40-47 (GPDGAGKT) and 362-369 (GPNGAGKS) each bind ATP.

It belongs to the ABC transporter superfamily. As to quaternary structure, the complex is probably composed of two ATP-binding proteins (YbhF) and two transmembrane proteins (YbhR and YbhS).

Its function is as follows. Part of the ABC transporter complex YbhFSR that could be involved in efflux of cefoperazone. Probably responsible for energy coupling to the transport system. In Escherichia coli (strain K12), this protein is Probable multidrug ABC transporter ATP-binding protein YbhF (ybhF).